We begin with the raw amino-acid sequence, 1322 residues long: Phosphoribosylformylglycinamidine synthase (1322 aa).

An ATP-binding site is contributed by 300-311; it reads GASTGAGGEIRD. Residues 593 to 608 are compositionally biased toward polar residues; the sequence is QQTPQRANHTETSPTP. Residues 593 to 613 form a disordered region; that stretch reads QQTPQRANHTETSPTPNTLPP. Residue Ala702 coordinates ATP. Positions 703, 742, 746, and 915 each coordinate Mg(2+). An ATP-binding site is contributed by Ser917. The Glutamine amidotransferase type-1 domain maps to 1073-1322; the sequence is VAILREQGIN…LFRNARAWVG (250 aa). Cys1166 functions as the Nucleophile in the catalytic mechanism. Catalysis depends on residues His1287 and Glu1289.

It in the N-terminal section; belongs to the FGAMS family. In terms of assembly, monomer.

It localises to the cytoplasm. The enzyme catalyses N(2)-formyl-N(1)-(5-phospho-beta-D-ribosyl)glycinamide + L-glutamine + ATP + H2O = 2-formamido-N(1)-(5-O-phospho-beta-D-ribosyl)acetamidine + L-glutamate + ADP + phosphate + H(+). Its pathway is purine metabolism; IMP biosynthesis via de novo pathway; 5-amino-1-(5-phospho-D-ribosyl)imidazole from N(2)-formyl-N(1)-(5-phospho-D-ribosyl)glycinamide: step 1/2. Functionally, phosphoribosylformylglycinamidine synthase involved in the purines biosynthetic pathway. Catalyzes the ATP-dependent conversion of formylglycinamide ribonucleotide (FGAR) and glutamine to yield formylglycinamidine ribonucleotide (FGAM) and glutamate. This chain is Phosphoribosylformylglycinamidine synthase, found in Xylella fastidiosa (strain 9a5c).